Reading from the N-terminus, the 184-residue chain is Large ribosomal subunit protein uL22B (184 aa).

Residue Lys-46 forms a Glycyl lysine isopeptide (Lys-Gly) (interchain with G-Cter in ubiquitin) linkage. Phosphothreonine is present on Thr-70.

The protein belongs to the universal ribosomal protein uL22 family. As to quaternary structure, component of the large ribosomal subunit (LSU). Mature yeast ribosomes consist of a small (40S) and a large (60S) subunit. The 40S small subunit contains 1 molecule of ribosomal RNA (18S rRNA) and 33 different proteins (encoded by 57 genes). The large 60S subunit contains 3 rRNA molecules (25S, 5.8S and 5S rRNA) and 46 different proteins (encoded by 81 genes). uL22 is associated with the polypeptide exit tunnel.

The protein resides in the cytoplasm. Its function is as follows. Component of the ribosome, a large ribonucleoprotein complex responsible for the synthesis of proteins in the cell. The small ribosomal subunit (SSU) binds messenger RNAs (mRNAs) and translates the encoded message by selecting cognate aminoacyl-transfer RNA (tRNA) molecules. The large subunit (LSU) contains the ribosomal catalytic site termed the peptidyl transferase center (PTC), which catalyzes the formation of peptide bonds, thereby polymerizing the amino acids delivered by tRNAs into a polypeptide chain. The nascent polypeptides leave the ribosome through a tunnel in the LSU and interact with protein factors that function in enzymatic processing, targeting, and the membrane insertion of nascent chains at the exit of the ribosomal tunnel. The sequence is that of Large ribosomal subunit protein uL22B from Saccharomyces cerevisiae (strain ATCC 204508 / S288c) (Baker's yeast).